Reading from the N-terminus, the 64-residue chain is Myotoxin-2 (64 aa).

Positions K1 to A21 are cleaved as a signal peptide. An intrachain disulfide couples C32 to C51.

This sequence belongs to the crotamine-myotoxin family. In terms of assembly, monomer. In terms of tissue distribution, expressed by the venom gland.

The protein localises to the secreted. Functionally, cationic peptide that possesses multiple functions. It acts as a cell-penetrating peptide (CPP), and as a potent voltage-gated potassium channel (Kv) inhibitor. It exhibits antimicrobial activities, hind limb paralysis, and severe muscle necrosis by a non-enzymatic mechanism. The sequence is that of Myotoxin-2 from Crotalus durissus terrificus (South American rattlesnake).